The following is a 141-amino-acid chain: Small ribosomal subunit protein uS19 (141 aa).

Belongs to the universal ribosomal protein uS19 family.

Its function is as follows. Protein S19 forms a complex with S13 that binds strongly to the 16S ribosomal RNA. The sequence is that of Small ribosomal subunit protein uS19 from Thermofilum pendens (strain DSM 2475 / Hrk 5).